We begin with the raw amino-acid sequence, 180 residues long: MSALRPLDKLPGLNTATILLVGTEDALLQQLADSMLKADCTSELKVHLARSLPLPCSVNRPRIDLIVFVVNLHSKLSLQSVEESLCHLDAAFFLGKVAFLATGAGRDSHCSIHRNTVVKLAHTYRSPLLFCDLEIEDFRAAMAQRLVRLLQICAGHVPGVSALNLLSLMRGSENPSLEDL.

Component of the CENPA-NAC complex, at least composed of CENPA, CENPC, CENPH, CENPM, CENPN, CENPT and CENPU. The CENPA-NAC complex interacts with the CENPA-CAD complex, composed of CENPI, CENPK, CENPL, CENPO, CENPP, CENPQ, CENPR and CENPS.

It is found in the nucleus. It localises to the cytoplasm. The protein localises to the chromosome. The protein resides in the centromere. Its subcellular location is the kinetochore. In terms of biological role, component of the CENPA-NAC (nucleosome-associated) complex, a complex that plays a central role in assembly of kinetochore proteins, mitotic progression and chromosome segregation. The CENPA-NAC complex recruits the CENPA-CAD (nucleosome distal) complex and may be involved in incorporation of newly synthesized CENPA into centromeres. The protein is Centromere protein M (CENPM) of Bos taurus (Bovine).